We begin with the raw amino-acid sequence, 73 residues long: Disintegrin trigramin-beta-2 (73 aa).

Residues 1–73 (EAGKDCDCGS…AGCPRNPFHA (73 aa)) form the Disintegrin domain. 6 disulfides stabilise this stretch: Cys-6/Cys-21, Cys-8/Cys-16, Cys-15/Cys-38, Cys-29/Cys-35, Cys-34/Cys-59, and Cys-47/Cys-66. Residues 51-53 (RGD) carry the Cell attachment site motif.

The protein belongs to the venom metalloproteinase (M12B) family. P-II subfamily. P-IIa sub-subfamily. Monomer (disintegrin). Expressed by the venom gland.

It localises to the secreted. Inhibits fibrinogen interaction with platelets. Acts by binding to the alpha-IIb/beta-3 receptor (ITGA2B/ITGB3) on the platelet surface and inhibits aggregation induced by ADP, thrombin, platelet-activating factor and collagen. The sequence is that of Disintegrin trigramin-beta-2 from Craspedocephalus gramineus (Bamboo pit viper).